Reading from the N-terminus, the 365-residue chain is Peptide chain release factor 2 (365 aa).

Position 252 is an N5-methylglutamine (glutamine 252).

It belongs to the prokaryotic/mitochondrial release factor family. In terms of processing, methylated by PrmC. Methylation increases the termination efficiency of RF2.

The protein localises to the cytoplasm. Peptide chain release factor 2 directs the termination of translation in response to the peptide chain termination codons UGA and UAA. This is Peptide chain release factor 2 from Colwellia psychrerythraea (strain 34H / ATCC BAA-681) (Vibrio psychroerythus).